The sequence spans 364 residues: Glutamine synthetase (364 aa).

One can recognise a GS beta-grasp domain in the interval 15-94 (VLAEYIWIDA…VLAECWNNDG (80 aa)). The GS catalytic domain occupies 101-364 (HRHECAKLMS…ETKRGEEEGF (264 aa)).

This sequence belongs to the glutamine synthetase family. In terms of assembly, homooctamer.

The protein resides in the cytoplasm. It carries out the reaction L-glutamate + NH4(+) + ATP = L-glutamine + ADP + phosphate + H(+). In Yarrowia lipolytica (strain CLIB 122 / E 150) (Yeast), this protein is Glutamine synthetase (GLN1).